A 581-amino-acid polypeptide reads, in one-letter code: MADPDSYRSSITSRPAFNRTVTSSTQNYGTPASGNRVLKIVTETHTSSVASGLSPYGQGAASTIRDDREREKKEITELNDRLASYIGKVRFLAAQNRKLEADLNVLQSRFGKSTGSVKIMYEMEITTATNVVKETGKDHEEAEKEIGKIKDQLDELRKKFEEAQKGRAEDRLKIDELLVTLSNLEAEINLLKRRIALLEEEVARLKKENFRLTSELQRVRSELDQETLLRIDNQNKVTTILEEIDFMKRGFETELKDLQAQAARDTTSENREYFKNELMNSIRDIRAEYDRFMAGNRNDLESWSQIRVQEINTQTNRQNAEINHKRDEVKRLHSQVSELKSKHAELAARNGLLEKQLEDLNYQLEDDQRSYEAALNDKDAQVRKLREECQALLVELQMLLDTKQTLDGELKVYRRMLEGNSEENGLRQLVEKVVRTSAINEEVDTETMRVVKGEHSSRTSYQRSAKGNVSIKEVSPEGKFVILENTHRDKEEPLGDWKLKRKIDGKREIVFTFPSDYILHPVQTVKIFARGNGVANPPEVLVFEGDDTFGAGANVQTILYNNSGEERATHMQRQSQQTTTS.

The tract at residues 1–33 (MADPDSYRSSITSRPAFNRTVTSSTQNYGTPAS) is disordered. The head stretch occupies residues 1–74 (MADPDSYRSS…RDDREREKKE (74 aa)). Residues 7 to 33 (YRSSITSRPAFNRTVTSSTQNYGTPAS) show a composition bias toward polar residues. One can recognise an IF rod domain in the interval 71–424 (EKKEITELND…RMLEGNSEEN (354 aa)). The segment at 75 to 106 (ITELNDRLASYIGKVRFLAAQNRKLEADLNVL) is coil 1A. A linker 1 region spans residues 107 to 120 (QSRFGKSTGSVKIM). The interval 121 to 258 (YEMEITTATN…RGFETELKDL (138 aa)) is coil 1B. Positions 259 to 276 (QAQAARDTTSENREYFKN) are linker 12. The tract at residues 277–424 (ELMNSIRDIR…RMLEGNSEEN (148 aa)) is coil 2. The segment at 425-578 (GLRQLVEKVV…THMQRQSQQT (154 aa)) is tail. Positions 457–574 (SRTSYQRSAK…EERATHMQRQ (118 aa)) constitute an LTD domain.

It belongs to the intermediate filament family. Forms some heteromeric filaments with ifb-1. Expressed in the embryonic and larval hypodermis. Also expressed in the ventral nerve cord of larvae.

The protein localises to the cytoplasm. Functionally, cytoplasmic intermediate filaments provide mechanical strength to cells. Essential protein, involved in attachment structures in epidermal cells that connect muscles to the external cuticle. Required for epidermal morphogenesis in embryos. Probable component of embryonic epidermal attachment structures. The polypeptide is Intermediate filament protein ifa-3 (ifa-3) (Caenorhabditis elegans).